Consider the following 751-residue polypeptide: Trehalose phosphorylase (751 aa).

The propeptide occupies 1–26 (MSTPHHQFESKSSTAIRRRLSSSVSS). A disordered region spans residues 1 to 28 (MSTPHHQFESKSSTAIRRRLSSSVSSKQ).

The protein belongs to the glycosyltransferase group 1 family. Glycosyltransferase 4 subfamily. As to quaternary structure, homodimer. Expressed in mycelia, stipes and pilei.

It carries out the reaction alpha,alpha-trehalose + phosphate = alpha-D-glucose + alpha-D-glucose 1-phosphate. Functionally, reversibly catalyzes the synthesis and degradation of trehalose from glucose and alpha-D-glucose 1-phosphate. The equilibrium lies in the direction of trehalose synthesis. The protein is Trehalose phosphorylase of Pleurotus sajor-caju (Oyster mushroom).